A 1171-amino-acid polypeptide reads, in one-letter code: Kinesin-like protein GA13060 (1171 aa).

The tract at residues 1–24 (MASSISRNGGFCGALQRAPPPMPP) is disordered. The 361-residue stretch at 40 to 400 (KVKVMLRVSD…IQIASRIHRL (361 aa)) folds into the Kinesin motor domain. 5 disordered regions span residues 737-774 (LLGQDMSLPPDGDEDQDSGPSEVPPALPLFDDPLGSRD), 798-820 (LVASRASSSHHQHQHHRPSSQRS), 932-955 (PAYRLTPSPPKQPSHSPSQGSLPS), 1043-1099 (TSSE…QRHR), and 1124-1143 (RHSHGVGGHKKHRHRHEGNG). The segment covering 805–816 (SSHHQHQHHRPS) has biased composition (basic residues). Residues 1043-1059 (TSSEAYDSGHDSNSTPR) show a composition bias toward polar residues. Positions 1124-1139 (RHSHGVGGHKKHRHRH) are enriched in basic residues.

Belongs to the TRAFAC class myosin-kinesin ATPase superfamily. Kinesin family. KIF26 subfamily.

It is found in the cytoplasm. The protein resides in the cytoskeleton. The chain is Kinesin-like protein GA13060 from Drosophila pseudoobscura pseudoobscura (Fruit fly).